We begin with the raw amino-acid sequence, 175 residues long: Succinate dehydrogenase assembly factor 2, mitochondrial (175 aa).

A disordered region spans residues 42 to 71; that stretch reads PFSDPELAHANNSLPSNSEEWPLPEPLDRT. A compositionally biased stretch (polar residues) spans 51 to 60; it reads ANNSLPSNSE.

It belongs to the SDHAF2 family. As to quaternary structure, interacts with the flavoprotein subunit within the SDH catalytic dimer.

It localises to the mitochondrion matrix. Functionally, plays an essential role in the assembly of succinate dehydrogenase (SDH), an enzyme complex (also referred to as respiratory complex II) that is a component of both the tricarboxylic acid (TCA) cycle and the mitochondrial electron transport chain, and which couples the oxidation of succinate to fumarate with the reduction of ubiquinone (coenzyme Q) to ubiquinol. Required for flavinylation (covalent attachment of FAD) of the flavoprotein subunit of the SDH catalytic dimer. This Cryptococcus neoformans var. neoformans serotype D (strain B-3501A) (Filobasidiella neoformans) protein is Succinate dehydrogenase assembly factor 2, mitochondrial.